The chain runs to 68 residues: Lantibiotic mersacidin (68 aa).

Residues 1-28 form a disordered region; sequence MSQEAIIRSWKDPFSRENSTQNPAGNPF. A propeptide spanning residues 1–48 is cleaved from the precursor; it reads MSQEAIIRSWKDPFSRENSTQNPAGNPFSELKEAQMDKLVGAGDMEAA. The beta-methyllanthionine (Cys-Thr) cross-link spans 49–50; it reads CT. Cross-links (beta-methyllanthionine (Thr-Cys)) lie at residues 52–60 and 61–66; these read TLPGGGGVC and TLTSEC. The S-(2-aminovinyl)-3-methyl-D-cysteine (Thr-Cys) cross-link spans 63-68; it reads TSECIC. The residue at position 64 (Ser-64) is a 2,3-didehydroalanine (Ser).

The protein belongs to the type B lantibiotic family. Post-translationally, maturation of lantibiotics involves the enzymatic conversion of Thr, and Ser into dehydrated AA and the formation of thioether bonds with cysteine. The carboxy-terminal beta-methyllanthionine undergoes decarboxylation. This is followed by membrane translocation and cleavage of the modified precursor.

Kills a number of Gram-positive bacteria. Acts at the level of cell wall biosynthesis by interfering with bacterial peptidoglycan biosynthesis. Specifically inhibits the conversion of the lipid II intermediate into polymeric nascent glycan strands by transglycosylation. May interact with the peptidoglycan precursor rather than with the enzyme. In Bacillus sp. (strain HIL-Y85/54728), this protein is Lantibiotic mersacidin (mrsA).